A 174-amino-acid chain; its full sequence is Pituitary tumor-transforming gene 1 protein-interacting protein (174 aa).

The signal sequence occupies residues 1–29 (MASAVLGLTLRWVMFLSAVLLLLLPGASA). Residues 30–93 (QEPPGVGCSE…RWGVCWVNFE (64 aa)) lie on the Extracellular side of the membrane. The PSI domain occupies 36-89 (GCSEYTNRSCEECLRNVSCLWCNENKACLDYPVRKILPPASLCKLSSARWGVCW). N-linked (GlcNAc...) asparagine glycans are attached at residues asparagine 42 and asparagine 51. The chain crosses the membrane as a helical span at residues 94 to 114 (ALIITMSVLGGSVLLGITVCC). Topologically, residues 115 to 174 (CCCCRRKRSRKPDKSDERAMREQEERRVRQEERRAEMKSRHDEIRKKYGLFKEQNPYEKF) are cytoplasmic. The interval 126-155 (PDKSDERAMREQEERRVRQEERRAEMKSRH) is disordered. Residues 127 to 163 (DKSDERAMREQEERRVRQEERRAEMKSRHDEIRKKYG) adopt a coiled-coil conformation. Residue tyrosine 171 is modified to Phosphotyrosine.

As to quaternary structure, interacts with PTTG1.

It localises to the cell membrane. Its subcellular location is the cytoplasm. It is found in the nucleus. May facilitate PTTG1 nuclear translocation. The protein is Pituitary tumor-transforming gene 1 protein-interacting protein (Pttg1ip) of Rattus norvegicus (Rat).